Here is a 275-residue protein sequence, read N- to C-terminus: MSNSRQHQGHFARKRFGQNFLVDHGVIDAIVAAIRPERGERMVEIGPGLGALTGPVIARLATPGSPLHAVELDRDLIGRLEQRFGELLELHAGDALTFDFGSIARPGGEPSLRIIGNLPYNISSPLLFHLMSFAPVVIDQHFMLQNEVVERMVAEPGTKAFSRLSVMLQYRYVMDKLIDVPPESFQPPPKVDSAIVRMIPHAPHELPAVDPAVLGEVVTAAFSQRRKMLRNTLGGYRDLVDFDALGFDLARRAEDIGVDEYVRVAQAVASARASG.

S-adenosyl-L-methionine contacts are provided by N19, L21, G46, E71, D94, and N117.

It belongs to the class I-like SAM-binding methyltransferase superfamily. rRNA adenine N(6)-methyltransferase family. RsmA subfamily.

It localises to the cytoplasm. The enzyme catalyses adenosine(1518)/adenosine(1519) in 16S rRNA + 4 S-adenosyl-L-methionine = N(6)-dimethyladenosine(1518)/N(6)-dimethyladenosine(1519) in 16S rRNA + 4 S-adenosyl-L-homocysteine + 4 H(+). In terms of biological role, specifically dimethylates two adjacent adenosines (A1518 and A1519) in the loop of a conserved hairpin near the 3'-end of 16S rRNA in the 30S particle. May play a critical role in biogenesis of 30S subunits. The polypeptide is Ribosomal RNA small subunit methyltransferase A (Burkholderia pseudomallei (strain 668)).